A 66-amino-acid chain; its full sequence is Cytochrome b-c1 complex subunit 9, mitochondrial (66 aa).

The Mitochondrial matrix segment spans residues 2-17 (SFSSLYKTFFKRNAVF). The chain crosses the membrane as a helical span at residues 18-43 (VGTIFAGAFVFQTVFDTAITSWYENH). Over 44–66 (NKGKLWKDVKARIAAGDGDDDDE) the chain is Mitochondrial intermembrane.

This sequence belongs to the UQCR10/QCR9 family. Component of the ubiquinol-cytochrome c oxidoreductase (cytochrome b-c1 complex, complex III, CIII), a multisubunit enzyme composed of 10 subunits. The complex is composed of 3 respiratory subunits cytochrome b (COB), cytochrome c1 (CYT1) and Rieske protein (RIP1), 2 core protein subunits COR1 and QCR2, and 5 low-molecular weight protein subunits QCR6, QCR7, QCR8, QCR9 and QCR10. The complex exists as an obligatory dimer and forms supercomplexes (SCs) in the inner mitochondrial membrane with a monomer or a dimer of cytochrome c oxidase (complex IV, CIV), resulting in 2 different assemblies (supercomplexes III(2)IV and III(2)IV(2)). Interacts with the transmembrane segment of RIP1.

The protein resides in the mitochondrion inner membrane. Component of the ubiquinol-cytochrome c oxidoreductase, a multisubunit transmembrane complex that is part of the mitochondrial electron transport chain which drives oxidative phosphorylation. The respiratory chain contains 3 multisubunit complexes succinate dehydrogenase (complex II, CII), ubiquinol-cytochrome c oxidoreductase (cytochrome b-c1 complex, complex III, CIII) and cytochrome c oxidase (complex IV, CIV), that cooperate to transfer electrons derived from NADH and succinate to molecular oxygen, creating an electrochemical gradient over the inner membrane that drives transmembrane transport and the ATP synthase. The cytochrome b-c1 complex catalyzes electron transfer from ubiquinol to cytochrome c, linking this redox reaction to translocation of protons across the mitochondrial inner membrane, with protons being carried across the membrane as hydrogens on the quinol. In the process called Q cycle, 2 protons are consumed from the matrix, 4 protons are released into the intermembrane space and 2 electrons are passed to cytochrome c. The protein is Cytochrome b-c1 complex subunit 9, mitochondrial (QCR9) of Saccharomyces cerevisiae (strain ATCC 204508 / S288c) (Baker's yeast).